The following is a 245-amino-acid chain: Pyridoxine 5'-phosphate synthase (245 aa).

Residue N7 coordinates 3-amino-2-oxopropyl phosphate. 9–10 (DH) provides a ligand contact to 1-deoxy-D-xylulose 5-phosphate. R18 is a 3-amino-2-oxopropyl phosphate binding site. H43 serves as the catalytic Proton acceptor. The 1-deoxy-D-xylulose 5-phosphate site is built by R45 and H50. The active-site Proton acceptor is E70. 1-deoxy-D-xylulose 5-phosphate is bound at residue T100. H190 functions as the Proton donor in the catalytic mechanism. 3-amino-2-oxopropyl phosphate is bound by residues G191 and 212–213 (GH).

This sequence belongs to the PNP synthase family. Homooctamer; tetramer of dimers.

The protein localises to the cytoplasm. The catalysed reaction is 3-amino-2-oxopropyl phosphate + 1-deoxy-D-xylulose 5-phosphate = pyridoxine 5'-phosphate + phosphate + 2 H2O + H(+). It functions in the pathway cofactor biosynthesis; pyridoxine 5'-phosphate biosynthesis; pyridoxine 5'-phosphate from D-erythrose 4-phosphate: step 5/5. Catalyzes the complicated ring closure reaction between the two acyclic compounds 1-deoxy-D-xylulose-5-phosphate (DXP) and 3-amino-2-oxopropyl phosphate (1-amino-acetone-3-phosphate or AAP) to form pyridoxine 5'-phosphate (PNP) and inorganic phosphate. This Prochlorococcus marinus (strain MIT 9313) protein is Pyridoxine 5'-phosphate synthase.